The following is a 264-amino-acid chain: 3-methyl-2-oxobutanoate hydroxymethyltransferase (264 aa).

Mg(2+) contacts are provided by D45 and D84. 3-methyl-2-oxobutanoate-binding positions include 45 to 46 (DS), D84, and K112. E114 contributes to the Mg(2+) binding site. E181 serves as the catalytic Proton acceptor.

The protein belongs to the PanB family. In terms of assembly, homodecamer; pentamer of dimers. Mg(2+) is required as a cofactor.

It localises to the cytoplasm. It catalyses the reaction 3-methyl-2-oxobutanoate + (6R)-5,10-methylene-5,6,7,8-tetrahydrofolate + H2O = 2-dehydropantoate + (6S)-5,6,7,8-tetrahydrofolate. The protein operates within cofactor biosynthesis; (R)-pantothenate biosynthesis; (R)-pantoate from 3-methyl-2-oxobutanoate: step 1/2. In terms of biological role, catalyzes the reversible reaction in which hydroxymethyl group from 5,10-methylenetetrahydrofolate is transferred onto alpha-ketoisovalerate to form ketopantoate. This Cronobacter sakazakii (strain ATCC BAA-894) (Enterobacter sakazakii) protein is 3-methyl-2-oxobutanoate hydroxymethyltransferase.